We begin with the raw amino-acid sequence, 502 residues long: MFGTLLLYCFFLATVPALAETGGERQLSPEKSEIWGPGLKADVVLPARYFYIQAVDTSGNKFTSSPGEKVFQVKVSAPEEQFTRVGVQVLDRKDGSFIVRYRMYASYKNLKVEIKFQGQHVAKSPYILKGPVYHENCDCPLQDSAAWLREMNCPETIAQIQRDLAHFPAVDPEKIAVEIPKRFGQRQSLCHYTLKDNKVYIKTHGEHVGFRIFMDAILLSLTRKVKMPDVELFVNLGDWPLEKKKSNSNIHPIFSWCGSTDSKDIVMPTYDLTDSVLETMGRVSLDMMSVQANTGPPWESKNSTAVWRGRDSRKERLELVKLSRKHPELIDAAFTNFFFFKHDENLYGPIVKHISFFDFFKHKYQINIDGTVAAYRLPYLLVGDSVVLKQDSIYYEHFYNELQPWKHYIPVKSNLSDLLEKLKWAKDHDEEAKKIAKAGQEFARNNLMGDDIFCYYFKLFQEYANLQVSEPQIREGMKRVEPQTEDDLFPCTCHRKKTKDEL.

Positions Met-1 to Ala-19 are cleaved as a signal peptide. The stretch at Glu-24–Gly-130 is one Filamin repeat. N-linked (GlcNAc...) asparagine glycans are attached at residues Asn-302 and Asn-414. The Prevents secretion from ER signature appears at Lys-499–Leu-502.

It belongs to the KDELC family. In terms of processing, N-glycosylated.

The protein resides in the endoplasmic reticulum lumen. It carries out the reaction L-seryl-[EGF-like domain protein] + UDP-alpha-D-glucose = 3-O-(beta-D-glucosyl)-L-seryl-[EGF-like domain protein] + UDP + H(+). The enzyme catalyses L-seryl-[EGF-like domain protein] + UDP-alpha-D-xylose = 3-O-(beta-D-xylosyl)-L-seryl-[EGF-like domain protein] + UDP + H(+). Its pathway is protein modification; protein glycosylation. Its function is as follows. Protein glucosyltransferase that catalyzes the transfer of glucose from UDP-glucose to a serine residue within the consensus sequence peptide C-X-N-T-X-G-S-F-X-C. Can also catalyze the transfer of xylose from UDP-xylose but less efficiently. Specifically targets extracellular EGF repeats of proteins such as NOTCH1, NOTCH3, FBN1, FBN2 and LTBP1. May regulate the transport of NOTCH1 and NOTCH3 to the plasma membrane and thereby the Notch signaling pathway. The chain is Protein O-glucosyltransferase 2 from Homo sapiens (Human).